Consider the following 900-residue polypeptide: E3 ubiquitin-protein ligase BRE1-like 2 (900 aa).

The disordered stretch occupies residues 1 to 31 (MENQESDEPMQKKPHLLDSVSPNSMARNSSP). Over residues 20 to 31 (VSPNSMARNSSP) the composition is skewed to polar residues. Coiled-coil stretches lie at residues 63–96 (TVLQLQNQKLVQQLDLQKKQLYDVESKIQELQLN), 217–300 (EDAT…KDAA), 437–660 (SRIE…AEME), and 706–737 (SEKQVMEKQLHQVNASVENFKARIAHNEEQMK). An RING-type zinc finger spans residues 848 to 887 (CGVCFDRPKEVVIVKCYHLFCQQCIQRSLEIRHRKCPGCG).

Belongs to the BRE1 family. May act as a tetramer consisting of two copies of HUB1 and two copies of HUB2. As to expression, ubiquitously expressed.

The protein resides in the nucleus. The enzyme catalyses S-ubiquitinyl-[E2 ubiquitin-conjugating enzyme]-L-cysteine + [acceptor protein]-L-lysine = [E2 ubiquitin-conjugating enzyme]-L-cysteine + N(6)-ubiquitinyl-[acceptor protein]-L-lysine.. Its pathway is protein modification; protein ubiquitination. E3 ubiquitin-protein ligase that monoubiquitinates H2B to form H2BK143ub1. H2BK143ub1 gives a specific tag for epigenetic transcriptional activation and is also prerequisite for H3K4me and maybe H3K79me. It thereby plays a central role in histone code and gene regulation. Forms a ubiquitin ligase complex in cooperation with the E2 enzyme UBC2/RAD6. The sequence is that of E3 ubiquitin-protein ligase BRE1-like 2 (HUB2) from Arabidopsis thaliana (Mouse-ear cress).